A 271-amino-acid polypeptide reads, in one-letter code: Sec-independent protein translocase protein TatC (271 aa).

6 helical membrane passes run Ile35–Gln55, Ala93–Ile113, Tyr124–Tyr144, Ile178–Met198, Ser213–Met233, and Cys234–Val254.

Belongs to the TatC family. In terms of assembly, forms a complex with TatA.

The protein localises to the cell inner membrane. In terms of biological role, part of the twin-arginine translocation (Tat) system that transports large folded proteins containing a characteristic twin-arginine motif in their signal peptide across membranes. The chain is Sec-independent protein translocase protein TatC from Koribacter versatilis (strain Ellin345).